The chain runs to 840 residues: V-type proton ATPase subunit a, vacuolar isoform (840 aa).

N-acetylalanine is present on Ala2. The Cytoplasmic portion of the chain corresponds to 2–404 (AEKEEAIFRS…DCYGIAQYRE (403 aa)). A coiled-coil region spans residues 117-145 (LEERLIQMEDATDQIEVQKNDLEQYRFIL). The chain crosses the membrane as a helical span at residues 405-423 (INAGLPTIVTFPFMFAIMF). Residues 424–425 (GD) lie on the Vacuolar side of the membrane. The chain crosses the membrane as a helical span at residues 426–442 (MGHGFLMTLAALSLVLN). Topologically, residues 443–456 (EKKINKMKRGEIFD) are cytoplasmic. Residues 457–486 (MAFTGRYIILLMGVFSMYTGFLYNDIFSKT) form a helical membrane-spanning segment. Topologically, residues 487–534 (MTIFKSGWKWPDHWKKGESITATSVGTYPIGLDWAWHGTENALLFSNS) are vacuolar. Residues 535-554 (YKMKLSILMGFIHMTYSYFF) traverse the membrane as a helical segment. Over 555-572 (SLANHLYFNSMIDIIGNF) the chain is Cytoplasmic. A helical transmembrane segment spans residues 573–593 (IPGLLFMQGIFGYLSVCIVYK). The Vacuolar portion of the chain corresponds to 594-636 (WAVDWVKDGKPAPGLLNMLINMFLSPGTIDDELYPHQAKVQVF). Residues 637 to 656 (LLLMALVCIPWLLLVKPLHF) traverse the membrane as a helical segment. Residues 657-719 (KFTHKKKSHE…DIMIHQVIHT (63 aa)) lie on the Cytoplasmic side of the membrane. The helical transmembrane segment at 720 to 744 (IEFCLNCVSHTASYLRLWALSLAHA) threads the bilayer. Topologically, residues 745–765 (QLSSVLWTMTIQIAFGFRGFV) are vacuolar. The chain crosses the membrane as a helical span at residues 766-804 (GVFMTVALFAMWFALTCAVLVLMEGTSAMLHSLRLHWVE). Residues 805–840 (SMSKFFVGEGLPYEPFAFEYKDMEVAVASASSSASS) are Cytoplasmic-facing.

The protein belongs to the V-ATPase 116 kDa subunit family. As to quaternary structure, V-ATPase is a heteromultimeric enzyme composed of a peripheral catalytic V1 complex (components A to H) attached to an integral membrane V0 proton pore complex (components: a, c, c', c'', d, e, f and VOA1). Post-translationally, glycosylated.

The protein resides in the vacuole membrane. In terms of biological role, subunit of the V0 complex of vacuolar(H+)-ATPase (V-ATPase), a multisubunit enzyme composed of a peripheral complex (V1) that hydrolyzes ATP and a membrane integral complex (V0) that translocates protons. V-ATPase is responsible for acidifying and maintaining the pH of intracellular compartments. Is present only in vacuolar V-ATPase complexes; enzymes containing this subunit have a 4-fold higher ratio of proton transport to ATP hydrolysis than complexes containing the Golgi/endosomal isoform and undergo reversible dissociation of V1 and V0 in response to glucose depletion. The sequence is that of V-type proton ATPase subunit a, vacuolar isoform from Saccharomyces cerevisiae (strain ATCC 204508 / S288c) (Baker's yeast).